The chain runs to 237 residues: MAVWLFGGRLGLRGRLSACRLLCPRFQSRGPQGGEDGDRLQPSSTAAKIPKIYTKTGDKGFSSTFTGERRPKDDQVFEAVGTTDELSSAIGFAMELVTEKGHMFAEELQKIQCMLQDVGSALATPRSSAREAHLKHTAFQEGPVLELERWIDKYSSQLPPLKAFILPSGGKSSSALHFCRAVCRRAERRVVPLVQMGETDANVAKFLNRLSDYLFTVARYAAMKEGSQEKIYKKHDV.

The transit peptide at 1–26 (MAVWLFGGRLGLRGRLSACRLLCPRF) directs the protein to the mitochondrion. The tract at residues 30-49 (GPQGGEDGDRLQPSSTAAKI) is disordered. Residues 54–57 (TKTG), 62–63 (SS), and lysine 72 contribute to the ATP site. A Phosphoserine modification is found at serine 128. 184 to 188 (RRAER) contacts ATP. An N6-succinyllysine modification is found at lysine 205. Asparagine 208 lines the ATP pocket. An N6-acetyllysine; alternate modification is found at lysine 224. Lysine 224 bears the N6-succinyllysine; alternate mark.

Belongs to the Cob(I)alamin adenosyltransferase family. As to quaternary structure, homotrimer.

It is found in the mitochondrion. The catalysed reaction is cob(I)alamin-[corrinoid adenosyltransferase] + ATP = apo-[corrinoid adenosyltransferase] + adenosylcob(III)alamin + triphosphate. In terms of biological role, converts cob(I)alamin to adenosylcobalamin (adenosylcob(III)alamin), a coenzyme for methylmalonyl-CoA mutase, therefore participates in the final step of the vitamin B12 conversion. Generates adenosylcobalamin (AdoCbl) and directly delivers the cofactor to MUT in a transfer that is stimulated by ATP-binding to MMAB and gated by MMAA. In Mus musculus (Mouse), this protein is Corrinoid adenosyltransferase MMAB.